Reading from the N-terminus, the 431-residue chain is Enolase (431 aa).

Residue Gln166 participates in (2R)-2-phosphoglycerate binding. The active-site Proton donor is the Glu208. Asp245, Glu288, and Asp315 together coordinate Mg(2+). Residues Lys340, Arg369, Ser370, and Lys391 each contribute to the (2R)-2-phosphoglycerate site. Lys340 serves as the catalytic Proton acceptor.

Belongs to the enolase family. Requires Mg(2+) as cofactor.

It localises to the cytoplasm. It is found in the secreted. Its subcellular location is the cell surface. The catalysed reaction is (2R)-2-phosphoglycerate = phosphoenolpyruvate + H2O. It functions in the pathway carbohydrate degradation; glycolysis; pyruvate from D-glyceraldehyde 3-phosphate: step 4/5. Its function is as follows. Catalyzes the reversible conversion of 2-phosphoglycerate (2-PG) into phosphoenolpyruvate (PEP). It is essential for the degradation of carbohydrates via glycolysis. This is Enolase from Clostridium acetobutylicum (strain ATCC 824 / DSM 792 / JCM 1419 / IAM 19013 / LMG 5710 / NBRC 13948 / NRRL B-527 / VKM B-1787 / 2291 / W).